The following is a 1302-amino-acid chain: Zinc finger protein 536 (1302 aa).

The disordered stretch occupies residues 1 to 26; sequence MEEASLCLGVSSTAPEAEPHLSGPVL. C2H2-type zinc fingers lie at residues 130 to 152, 158 to 180, 274 to 297, 300 to 323, 345 to 367, 373 to 395, and 631 to 653; these read YPCPLCGKRFRFNSILSLHMRTH, FKCPYCDHRAAQKGNLKIHLRTH, FRCTFCKGKFKKREELDRHIRILH, YKCTLCDFAASQEEELISHVEKAH, FRCEVCGQVFSQAWFLKGHMRKH, HCCQICGRRFKEPWFLKNHMKVH, and TECPDCGRVFRTYHQVVVHSRVH. The tract at residues 650–736 is disordered; the sequence is SRVHKRDRKS…IGEEAGRAGG (87 aa). Basic and acidic residues predominate over residues 657–676; the sequence is RKSDEDALHVGVGLEERRGS. The segment covering 677–698 has biased composition (polar residues); the sequence is GSDQESQSVSRSTTPGSSNVTE. 2 C2H2-type zinc fingers span residues 753–775 and 781–803; these read KDCPYCGKTFRTSHHLKVHLRIH and YKCPHCDYAGTQSASLKYHLERH. Disordered regions lie at residues 804 to 832, 855 to 897, 935 to 988, and 1133 to 1261; these read HRERQNGAGPLSGQPPNQEHKDETSSKAP, GPAS…SKSS, KDTK…APTL, and NKNT…GLEK. 2 positions are modified to phosphoserine: Ser-828 and Ser-829. Polar residues predominate over residues 869 to 883; that stretch reads GDHSGQATGMPSELS. Residues 935 to 973 show a composition bias toward basic and acidic residues; sequence KDTKDKVPSDAHPMKAHTAEGGEEKASMKPSQRKSEKSQ. Acidic residues-rich tracts occupy residues 1161–1171 and 1179–1188; these read DLSDIASSEDM and NEDEELDTEP. The span at 1198-1212 shows a compositional bias: low complexity; that stretch reads LSKDGSSEGGDSLLS.

Belongs to the krueppel C2H2-type zinc-finger protein family. Expressed predominantly in the brain, while a weak signal is also detected in the heart and testis. Expression is abundant in neuronal cells of the cerebral cortex, hippocampus and hypothalamic area (at protein level).

The protein resides in the nucleus. Functionally, transcriptional repressor that negatively regulates neuron differentiation by repressing retinoic acid-induced gene transcription. Binds and interrupts RARA from binding to retinoic acid response elements (RARE) composed of tandem 5'-AGGTCA-3' sites known as DR1-DR5. Recognizes and binds 2 copies of the core DNA sequence 5'-CCCCCA-3'. This Mus musculus (Mouse) protein is Zinc finger protein 536 (Znf536).